A 414-amino-acid chain; its full sequence is MTDTTLVEAGDPAEDAPEWPMKRDTGCPFDPPPGVRKLLAEKPLSRARIWDGSTPWVVTRHADQRALLSDPRVSHDGLRDGYPHISADFKFLSMAQPSFAGQDDPEHGRIRRMVTLPFTARRIEAMRPAIQKITDELIDGMLAGPKPVDLVEALALPVPVRVICEMLGVPYEDREFLQQNNNAMIYRDTAQGDAQKAAIAQAMYLKELVGTKLGDRGDDILSDLAVQVEAGEITQDDAAGIGMMLLGAGHETTANMIALGTLALLENPEQLAEVRDSDDPKVIVNTVEELLRYLTIAQDTVRRIAAEDIEIGGVVIKAGEGIVFPLNAANWDPDLYPEAPDRLDIHRANARRHLAFGYGVHQCLGATLARVELQIVYSTLLRRIPTLALAGTLDEIPFKHDQIAHGVYELPVTW.

The segment at 1-32 is disordered; sequence MTDTTLVEAGDPAEDAPEWPMKRDTGCPFDPP. Positions 75, 107, 111, 303, 361, and 363 each coordinate heme b.

It belongs to the cytochrome P450 family. As to quaternary structure, monomer. The cofactor is heme b.

It functions in the pathway antibiotic biosynthesis. In terms of biological role, involved in the synthesis of the 16-membered macrolide antibiotics FD-891 and FD-892. Consecutively catalyzes epoxidation of C8-C9 and then hydroxylation at C10 to convert 25-O-methyl-FD-892 to FD-891. Consecutively catalyzes epoxidation of C8-C9 and then hydroxylation at C10 to convert 8,9-epoxy-FD-892 to 25-O-demethyl-FD-891 as well as converting 25-oxo-FD-892 to 8,9-epoxy-25-oxo-FD-892 and 8,9-epoxy-10-hydroxy-25-oxo-FD-892. In vitro is furnished with P.putida putidaredoxin and putidaredoxin reductase to provide the required two-electron reduction. This chain is Cytochrome P450 GfsF, found in Streptomyces halstedii.